The primary structure comprises 640 residues: DNA mismatch repair protein MutL (640 aa).

2 disordered regions span residues 332-353 (PNVQ…FNFP) and 408-431 (PAHT…TFHD).

It belongs to the DNA mismatch repair MutL/HexB family.

Its function is as follows. This protein is involved in the repair of mismatches in DNA. It is required for dam-dependent methyl-directed DNA mismatch repair. May act as a 'molecular matchmaker', a protein that promotes the formation of a stable complex between two or more DNA-binding proteins in an ATP-dependent manner without itself being part of a final effector complex. In Chloroherpeton thalassium (strain ATCC 35110 / GB-78), this protein is DNA mismatch repair protein MutL.